Here is a 173-residue protein sequence, read N- to C-terminus: MPRSQRNDNFIDKTFTVIADLILKILPVSKKTKEAFAYYRDGMSAQSEGAYAEALENYYEALRLEEDPYDKSYTFYNIALIHTSNGDQTKALEYYRQALDLNPKMPQALNNMAVIYHAQGEQAAEQGDMEMAEALFDQAAFYWKQAIRLAPDNYIEAQNWLKTTGRSKLDILI.

TPR repeat units follow at residues 35-68 (AFAY…EEDP), 72-105 (SYTF…NPKM), and 120-153 (GEQA…APDN).

This sequence belongs to the Ycf3 family.

It localises to the plastid. The protein localises to the cyanelle thylakoid membrane. Essential for the assembly of the photosystem I (PSI) complex. May act as a chaperone-like factor to guide the assembly of the PSI subunits. The polypeptide is Photosystem I assembly protein Ycf3 (Cyanophora paradoxa).